The primary structure comprises 509 residues: Putative (R)-citramalate synthase CimA (509 aa).

Residues 14–267 (VRIFDTTLRD…DTGIRTERLT (254 aa)) form the Pyruvate carboxyltransferase domain.

Belongs to the alpha-IPM synthase/homocitrate synthase family. Homodimer.

It carries out the reaction pyruvate + acetyl-CoA + H2O = (3R)-citramalate + CoA + H(+). It participates in amino-acid biosynthesis; L-isoleucine biosynthesis; 2-oxobutanoate from pyruvate: step 1/3. Catalyzes the condensation of pyruvate and acetyl-coenzyme A to form (R)-citramalate. This chain is Putative (R)-citramalate synthase CimA (cimA), found in Methanopyrus kandleri (strain AV19 / DSM 6324 / JCM 9639 / NBRC 100938).